Here is a 219-residue protein sequence, read N- to C-terminus: Phosphoribosylformylglycinamidine synthase subunit PurQ (219 aa).

The 218-residue stretch at 2 to 219 folds into the Glutamine amidotransferase type-1 domain; that stretch reads KIAVITFPGS…KVVLDLILGS (218 aa). The active-site Nucleophile is the Cys86. Catalysis depends on residues His195 and Glu197.

Part of the FGAM synthase complex composed of 1 PurL, 1 PurQ and 2 PurS subunits.

Its subcellular location is the cytoplasm. The catalysed reaction is N(2)-formyl-N(1)-(5-phospho-beta-D-ribosyl)glycinamide + L-glutamine + ATP + H2O = 2-formamido-N(1)-(5-O-phospho-beta-D-ribosyl)acetamidine + L-glutamate + ADP + phosphate + H(+). It catalyses the reaction L-glutamine + H2O = L-glutamate + NH4(+). The protein operates within purine metabolism; IMP biosynthesis via de novo pathway; 5-amino-1-(5-phospho-D-ribosyl)imidazole from N(2)-formyl-N(1)-(5-phospho-D-ribosyl)glycinamide: step 1/2. Its function is as follows. Part of the phosphoribosylformylglycinamidine synthase complex involved in the purines biosynthetic pathway. Catalyzes the ATP-dependent conversion of formylglycinamide ribonucleotide (FGAR) and glutamine to yield formylglycinamidine ribonucleotide (FGAM) and glutamate. The FGAM synthase complex is composed of three subunits. PurQ produces an ammonia molecule by converting glutamine to glutamate. PurL transfers the ammonia molecule to FGAR to form FGAM in an ATP-dependent manner. PurS interacts with PurQ and PurL and is thought to assist in the transfer of the ammonia molecule from PurQ to PurL. This chain is Phosphoribosylformylglycinamidine synthase subunit PurQ, found in Leptospira interrogans serogroup Icterohaemorrhagiae serovar copenhageni (strain Fiocruz L1-130).